We begin with the raw amino-acid sequence, 233 residues long: MELLRTVSDTKRTFYALHTRPINTIYRRVVEELMVEMHLLSVNVDFSYNPIYALGVVTTFDRFMQGYQPERDKESIFSAICQAVEQEPQRYRQDAERLKAVAQSLPVNDLVAWLSQANHLQQDADLQAQLQAIASNPNFKYSRLFAIGLFTLLEQSNPDLVKDEKQRTEALKTIAAGLHLSDDKLSKDLELYRSNLDKMTQALAVMADMLTADRKKREQRQQQASTPVAPPNE.

Residues 183 to 205 adopt a coiled-coil conformation; it reads DKLSKDLELYRSNLDKMTQALAV. A disordered region spans residues 213–233; sequence DRKKREQRQQQASTPVAPPNE.

Belongs to the THF1 family.

In terms of biological role, may be involved in photosynthetic membrane biogenesis. In Trichormus variabilis (strain ATCC 29413 / PCC 7937) (Anabaena variabilis), this protein is Protein Thf1.